The following is a 341-amino-acid chain: 4-hydroxy-2-oxovalerate aldolase (341 aa).

The Pyruvate carboxyltransferase domain maps to 5–257; sequence ITLHDMTLRD…ETGVDVFRIA (253 aa). 13 to 14 contributes to the substrate binding site; the sequence is RD. A Mn(2+)-binding site is contributed by Asp14. Catalysis depends on His17, which acts as the Proton acceptor. The substrate site is built by Ser167 and His196. Residues His196 and His198 each coordinate Mn(2+). Tyr287 contacts substrate.

This sequence belongs to the 4-hydroxy-2-oxovalerate aldolase family.

The enzyme catalyses (S)-4-hydroxy-2-oxopentanoate = acetaldehyde + pyruvate. This Cupriavidus taiwanensis (strain DSM 17343 / BCRC 17206 / CCUG 44338 / CIP 107171 / LMG 19424 / R1) (Ralstonia taiwanensis (strain LMG 19424)) protein is 4-hydroxy-2-oxovalerate aldolase (mhpE).